The sequence spans 909 residues: Valine--tRNA ligase (909 aa).

The short motif at 52 to 62 (PNVTGVLHVGH) is the 'HIGH' region element. Positions 542–546 (KMSKS) match the 'KMSKS' region motif. K545 is a binding site for ATP. Residues 843–902 (IDIDQLKKRFEKELEKNEQNASKIDSKLKNENFVKNAPPEVIEGEKEKHAEFLRRIEKLK) adopt a coiled-coil conformation.

The protein belongs to the class-I aminoacyl-tRNA synthetase family. ValS type 1 subfamily. In terms of assembly, monomer.

The protein localises to the cytoplasm. It catalyses the reaction tRNA(Val) + L-valine + ATP = L-valyl-tRNA(Val) + AMP + diphosphate. Its function is as follows. Catalyzes the attachment of valine to tRNA(Val). As ValRS can inadvertently accommodate and process structurally similar amino acids such as threonine, to avoid such errors, it has a 'posttransfer' editing activity that hydrolyzes mischarged Thr-tRNA(Val) in a tRNA-dependent manner. The polypeptide is Valine--tRNA ligase (Treponema denticola (strain ATCC 35405 / DSM 14222 / CIP 103919 / JCM 8153 / KCTC 15104)).